The primary structure comprises 1025 residues: Multidrug resistance protein MdtC (1025 aa).

A run of 12 helical transmembrane segments spans residues 3–23 (FFALFIYRPVATILLSVAITL), 333–353 (EVEQTLIISVALVILVVFLFL), 360–380 (IIPAVAVPVSLIGTFAAMYLC), 387–407 (LSLMALTIATGFVVDDAIVVL), 431–451 (VGFTVLSMSLSLVAVFLPLLL), 463–483 (FAVTLSVAIGISLLVSLTLTP), 528–548 (LVGVVLLGTIALNIWLYISIP), 853–873 (VILIIAAIATVYIVLGILYES), 875–895 (VHPLTILSTLPSAGVGALLAL), 897–917 (LFNAPFSLIALIGIMLLIGIV), 953–973 (PIMMTTLAALFGALPLVLSGG), and 984–1004 (ITIVGGLVMSQLLTLYTTPVV).

The protein belongs to the resistance-nodulation-cell division (RND) (TC 2.A.6) family. MdtC subfamily. In terms of assembly, part of a tripartite efflux system composed of MdtA, MdtB and MdtC. MdtC forms a heteromultimer with MdtB.

The protein localises to the cell inner membrane. The MdtABC tripartite complex confers resistance against novobiocin and deoxycholate. The chain is Multidrug resistance protein MdtC from Escherichia coli (strain 55989 / EAEC).